The chain runs to 243 residues: Triosephosphate isomerase (243 aa).

9–11 is a binding site for substrate; that stretch reads NWK. His-96 (electrophile) is an active-site residue. The Proton acceptor role is filled by Glu-165. Substrate is bound by residues Gly-171, Ser-204, and 225 to 226; that span reads GG.

Belongs to the triosephosphate isomerase family. As to quaternary structure, homodimer.

It localises to the cytoplasm. It carries out the reaction D-glyceraldehyde 3-phosphate = dihydroxyacetone phosphate. Its pathway is carbohydrate biosynthesis; gluconeogenesis. It participates in carbohydrate degradation; glycolysis; D-glyceraldehyde 3-phosphate from glycerone phosphate: step 1/1. Its function is as follows. Involved in the gluconeogenesis. Catalyzes stereospecifically the conversion of dihydroxyacetone phosphate (DHAP) to D-glyceraldehyde-3-phosphate (G3P). This chain is Triosephosphate isomerase, found in Prochlorococcus marinus (strain MIT 9313).